A 352-amino-acid chain; its full sequence is C-X-C chemokine receptor type 4 (352 aa).

Positions 1-21 (MEGISIYTSDNYTEEMGSGDY) are important for chemokine binding and signaling. Over 1 to 38 (MEGISIYTSDNYTEEMGSGDYDSIKEPCFREENAHFNR) the chain is Extracellular. At Tyr7 the chain carries Sulfotyrosine. Residue Asn11 is glycosylated (N-linked (GlcNAc...) asparagine). Tyr12 is modified (sulfotyrosine). Ser18 carries an O-linked (Xyl...) (chondroitin sulfate) serine glycan. Tyr21 carries the sulfotyrosine modification. 2 disulfide bridges follow: Cys28-Cys274 and Cys109-Cys186. Residues 39–63 (IFLPTIYSIIFLTGIVGNGLVILVM) form a helical membrane-spanning segment. Residues 64–77 (GYQKKLRSMTDKYR) are Cytoplasmic-facing. Residues 78–99 (LHLSVADLLFVITLPFWAVDAV) form a helical membrane-spanning segment. The chemokine binding stretch occupies residues 94-97 (WAVD). Topologically, residues 100–110 (ANWYFGNFLCK) are extracellular. Residues 111–130 (AVHVIYTVNLYSSVLILAFI) traverse the membrane as a helical segment. Positions 113–117 (HVIYT) are chemokine binding. Over 131 to 154 (SLDRYLAIVHATNSQKPRKLLAEK) the chain is Cytoplasmic. An Important for signaling motif is present at residues 133 to 135 (DRY). Residues 135 to 147 (YLAIVHATNSQKP) form an involved in dimerization; when bound to chemokine region. The helical transmembrane segment at 155–174 (VVYVGVWIPALLLTIPDFIF) threads the bilayer. The Extracellular portion of the chain corresponds to 175 to 195 (ASVSEADDRYICDRFYPNDLW). Positions 186-190 (CDRFY) are chemokine binding, important for signaling. The interval 191-210 (PNDLWVVVFQFQHIMVGLIL) is involved in dimerization. Residues 196 to 216 (VVVFQFQHIMVGLILPGIVIL) form a helical membrane-spanning segment. Topologically, residues 217–241 (SCYCIIISKLSHSKGHQKGKALKTT) are cytoplasmic. The helical transmembrane segment at 242 to 261 (VILILAFFACWLPYYIGISI) threads the bilayer. The Extracellular segment spans residues 262-282 (DSFILLEIIKQGCEFENTVHK). Residues 266-268 (LLE) form an involved in dimerization region. The helical transmembrane segment at 283-302 (WISITEALAFFHCCLNPILY) threads the bilayer. Residues 303–352 (AFLGAKFKTSAQHALTSVSRGSSLKILSKGKRGGHSSVSTESESSSFHSS) are Cytoplasmic-facing. Phosphoserine occurs at positions 319 and 321. Residues Ser324 and Ser325 each carry the phosphoserine; by PKC and GRK6 modification. The segment at 329-352 (LSKGKRGGHSSVSTESESSSFHSS) is disordered. Ser330 is modified (phosphoserine; by GRK6). Lys331 is covalently cross-linked (Glycyl lysine isopeptide (Lys-Gly) (interchain with G-Cter in ubiquitin)). Low complexity predominate over residues 337-352 (HSSVSTESESSSFHSS). Ser339 bears the Phosphoserine; by GRK6 mark. 2 positions are modified to phosphoserine: Ser348 and Ser351.

Belongs to the G-protein coupled receptor 1 family. In terms of assembly, monomer. Can form homodimers. Interacts with CD164. Interacts with ARRB2; the interaction is dependent on the C-terminal phosphorylation of CXCR4 and allows activation of MAPK1 and MAPK3. Interacts with ARR3; the interaction is dependent on the C-terminal phosphorylation of CXCR4 and modulates calcium mobilization. Interacts with RNF113A; the interaction, enhanced by CXCL12, promotes CXCR4 ubiquitination and subsequent degradation. Interacts (via the cytoplasmic C-terminal) with ITCH (via the WW domains I and II); the interaction, enhanced by CXCL12, promotes CXCR4 ubiquitination and leads to its degradation. Interacts with extracellular ubiquitin. Interacts with DBN1; this interaction is enhanced by antigenic stimulation. Following LPS binding, may form a complex with GDF5, HSP90AA1 and HSPA8. Post-translationally, phosphorylated on agonist stimulation. Rapidly phosphorylated on serine and threonine residues in the C-terminal. Phosphorylation at Ser-324 and Ser-325 leads to recruitment of ITCH, ubiquitination and protein degradation. In terms of processing, ubiquitinated after ligand binding, leading to its degradation. Ubiquitinated by ITCH at the cell membrane on agonist stimulation. The ubiquitin-dependent mechanism, endosomal sorting complex required for transport (ESCRT), then targets CXCR4 for lysosomal degradation. This process is dependent also on prior Ser-/Thr-phosphorylation in the C-terminal of CXCR4. Also binding of ARRB1 to STAM negatively regulates CXCR4 sorting to lysosomes though modulating ubiquitination of SFR5S. Sulfation is required for efficient binding of CXCL12/SDF-1alpha and promotes its dimerization. Post-translationally, O- and N-glycosylated. N-glycosylation can mask coreceptor function. The O-glycosylation chondroitin sulfate attachment does not affect interaction with CXCL12/SDF-1alpha nor its coreceptor activity.

It localises to the cell membrane. It is found in the cell junction. Its subcellular location is the early endosome. The protein localises to the late endosome. The protein resides in the lysosome. In terms of biological role, receptor for the C-X-C chemokine CXCL12/SDF-1 that transduces a signal by increasing intracellular calcium ion levels and enhancing MAPK1/MAPK3 activation. Involved in the AKT signaling cascade. Plays a role in regulation of cell migration, e.g. during wound healing. Acts as a receptor for extracellular ubiquitin; leading to enhanced intracellular calcium ions and reduced cellular cAMP levels. Binds bacterial lipopolysaccharide (LPS) et mediates LPS-induced inflammatory response, including TNF secretion by monocytes. Involved in hematopoiesis and in cardiac ventricular septum formation. Also plays an essential role in vascularization of the gastrointestinal tract, probably by regulating vascular branching and/or remodeling processes in endothelial cells. Involved in cerebellar development. In the CNS, could mediate hippocampal-neuron survival. This chain is C-X-C chemokine receptor type 4 (CXCR4), found in Chlorocebus aethiops (Green monkey).